Here is a 398-residue protein sequence, read N- to C-terminus: Enoyl-[acyl-carrier-protein] reductase [NADH] (398 aa).

NAD(+) contacts are provided by residues 48 to 53 (GASTGY), 74 to 75 (FE), 111 to 112 (DA), and 139 to 140 (LA). Residue Tyr-225 coordinates substrate. Tyr-235 acts as the Proton donor in catalysis. Residues Lys-244 and 273 to 275 (VVT) contribute to the NAD(+) site.

This sequence belongs to the TER reductase family. As to quaternary structure, monomer.

It catalyses the reaction a 2,3-saturated acyl-[ACP] + NAD(+) = a (2E)-enoyl-[ACP] + NADH + H(+). It participates in lipid metabolism; fatty acid biosynthesis. Its function is as follows. Involved in the final reduction of the elongation cycle of fatty acid synthesis (FAS II). Catalyzes the reduction of a carbon-carbon double bond in an enoyl moiety that is covalently linked to an acyl carrier protein (ACP). This is Enoyl-[acyl-carrier-protein] reductase [NADH] from Pseudomonas fluorescens (strain ATCC BAA-477 / NRRL B-23932 / Pf-5).